A 553-amino-acid chain; its full sequence is HTH-type transcriptional regulator SgrR (553 aa).

The region spanning 1–113 (MSTSRLQQQF…RQMLLSQLGR (113 aa)) is the HTH marR-type domain. Positions 26–49 (LQALAEVLNCSRRHVRSLLGKMQH) form a DNA-binding region, H-T-H motif. Positions 163–494 (ELEPDLSHHW…EELHQDIESW (332 aa)) are solute-binding.

Activates the small RNA gene sgrS under glucose-phosphate stress conditions as well as yfdZ. Represses its own transcription under both stress and non-stress conditions. Might act as a sensor of the intracellular accumulation of phosphoglucose by binding these molecules in its C-terminal solute-binding domain. The polypeptide is HTH-type transcriptional regulator SgrR (Yersinia pseudotuberculosis serotype I (strain IP32953)).